The following is a 559-amino-acid chain: Formate--tetrahydrofolate ligase (559 aa).

ATP is bound at residue threonine 66–threonine 73.

Belongs to the formate--tetrahydrofolate ligase family.

It carries out the reaction (6S)-5,6,7,8-tetrahydrofolate + formate + ATP = (6R)-10-formyltetrahydrofolate + ADP + phosphate. It functions in the pathway one-carbon metabolism; tetrahydrofolate interconversion. This Nocardioides sp. (strain ATCC BAA-499 / JS614) protein is Formate--tetrahydrofolate ligase.